The primary structure comprises 155 residues: Aspartate 1-decarboxylase (155 aa).

The active-site Schiff-base intermediate with substrate; via pyruvic acid is the Ser24. Ser24 bears the Pyruvic acid (Ser) mark. Thr56 serves as a coordination point for substrate. The active-site Proton donor is the Tyr57. 72-74 is a binding site for substrate; the sequence is GAA.

It belongs to the PanD family. As to quaternary structure, heterooctamer of four alpha and four beta subunits. It depends on pyruvate as a cofactor. Post-translationally, is synthesized initially as an inactive proenzyme, which is activated by self-cleavage at a specific serine bond to produce a beta-subunit with a hydroxyl group at its C-terminus and an alpha-subunit with a pyruvoyl group at its N-terminus.

Its subcellular location is the cytoplasm. The enzyme catalyses L-aspartate + H(+) = beta-alanine + CO2. Its pathway is cofactor biosynthesis; (R)-pantothenate biosynthesis; beta-alanine from L-aspartate: step 1/1. In terms of biological role, catalyzes the pyruvoyl-dependent decarboxylation of aspartate to produce beta-alanine. In Agrobacterium fabrum (strain C58 / ATCC 33970) (Agrobacterium tumefaciens (strain C58)), this protein is Aspartate 1-decarboxylase.